We begin with the raw amino-acid sequence, 180 residues long: Secreted RxLR effector protein 19 (180 aa).

Positions 1–19 (MKLLLRALATFVLLNGVDS) are cleaved as a signal peptide. The 147-residue stretch at 25-171 (FQKCNVTGGP…IFALGALWGP (147 aa)) folds into the Jacalin-type lectin domain. The short motif at 52-77 (RALRLCGVDFVDGIGVTIWDLSVEEN) is the RxLR-dEER element.

The protein belongs to the RxLR effector family.

The protein localises to the secreted. The protein resides in the host cytoplasm. It localises to the host nucleus. In terms of biological role, effector that partially suppresses the tobacco programmed cell death induced by cell death-inducing proteins. The sequence is that of Secreted RxLR effector protein 19 from Plasmopara viticola (Downy mildew of grapevine).